Reading from the N-terminus, the 452-residue chain is UPF0210 protein Hore_14430 (452 aa).

The protein belongs to the UPF0210 family. In terms of assembly, homodimer.

This chain is UPF0210 protein Hore_14430, found in Halothermothrix orenii (strain H 168 / OCM 544 / DSM 9562).